The chain runs to 176 residues: ATP-dependent protease subunit HslV (176 aa).

Thr5 is an active-site residue. Ser161, Cys164, and Thr167 together coordinate Na(+).

This sequence belongs to the peptidase T1B family. HslV subfamily. In terms of assembly, a double ring-shaped homohexamer of HslV is capped on each side by a ring-shaped HslU homohexamer. The assembly of the HslU/HslV complex is dependent on binding of ATP.

The protein resides in the cytoplasm. It catalyses the reaction ATP-dependent cleavage of peptide bonds with broad specificity.. Allosterically activated by HslU binding. Functionally, protease subunit of a proteasome-like degradation complex believed to be a general protein degrading machinery. In Desulfitobacterium hafniense (strain Y51), this protein is ATP-dependent protease subunit HslV.